A 484-amino-acid chain; its full sequence is Cysteine--tRNA ligase (484 aa).

Cysteine 29 lines the Zn(2+) pocket. The 'HIGH' region signature appears at 31–41 (ATVQGMPHVGH). 3 residues coordinate Zn(2+): cysteine 227, histidine 252, and glutamate 256. The 'KMSKS' region signature appears at 283-287 (KMSKS). Residue lysine 286 participates in ATP binding.

This sequence belongs to the class-I aminoacyl-tRNA synthetase family. Monomer. Requires Zn(2+) as cofactor.

The protein resides in the cytoplasm. The enzyme catalyses tRNA(Cys) + L-cysteine + ATP = L-cysteinyl-tRNA(Cys) + AMP + diphosphate. The chain is Cysteine--tRNA ligase from Paenarthrobacter aurescens (strain TC1).